The sequence spans 335 residues: Heme A synthase (335 aa).

8 helical membrane-spanning segments follow: residues 9–29 (VAIW…IGGF), 90–110 (YVHR…FIYF), 120–140 (VVIR…TGWY), 156–176 (MLTL…YQFF), 197–217 (VGII…VAGL), 255–275 (VQFI…VLTI), 283–303 (VYVM…TLLL), and 309–329 (IAIS…CFLC). H259 is a heme binding site. Residue H313 coordinates heme.

It belongs to the COX15/CtaA family. Type 2 subfamily. In terms of assembly, interacts with CtaB. The cofactor is heme b.

It localises to the cell membrane. The enzyme catalyses Fe(II)-heme o + 2 A + H2O = Fe(II)-heme a + 2 AH2. The protein operates within porphyrin-containing compound metabolism; heme A biosynthesis; heme A from heme O: step 1/1. Catalyzes the conversion of heme O to heme A by two successive hydroxylations of the methyl group at C8. The first hydroxylation forms heme I, the second hydroxylation results in an unstable dihydroxymethyl group, which spontaneously dehydrates, resulting in the formyl group of heme A. The polypeptide is Heme A synthase (Wolbachia sp. subsp. Brugia malayi (strain TRS)).